Reading from the N-terminus, the 172-residue chain is Nicotinamide-nucleotide adenylyltransferase (172 aa).

It belongs to the archaeal NMN adenylyltransferase family.

Its subcellular location is the cytoplasm. The catalysed reaction is beta-nicotinamide D-ribonucleotide + ATP + H(+) = diphosphate + NAD(+). It participates in cofactor biosynthesis; NAD(+) biosynthesis; NAD(+) from nicotinamide D-ribonucleotide: step 1/1. This is Nicotinamide-nucleotide adenylyltransferase from Aeropyrum pernix (strain ATCC 700893 / DSM 11879 / JCM 9820 / NBRC 100138 / K1).